The following is a 599-amino-acid chain: Leucine zipper putative tumor suppressor 1 (599 aa).

G2 carries N-myristoyl glycine lipidation. Disordered regions lie at residues 135–190 (GAIL…TTSS) and 288–324 (EFASGQTFEERPRRTRDELECLEPKSKLKPPSQKSQR). A compositionally biased stretch (basic and acidic residues) spans 153 to 162 (PPDKPKEQEL). A compositionally biased stretch (polar residues) spans 174–190 (SGRNSMSSLPTHSTTSS). Residues 256 to 572 (LSTDECTIQE…LEKALQQLAR (317 aa)) adopt a coiled-coil conformation. The span at 288–313 (EFASGQTFEERPRRTRDELECLEPKS) shows a compositional bias: basic and acidic residues.

This sequence belongs to the LZTS family. As to quaternary structure, binds EEF1G, TLK2 and CDK1. In terms of processing, phosphorylated on serine residues. Hyperphosphorylated by the cAMP-dependent kinase PKA during cell-cycle progression.

The protein localises to the cytoplasm. The protein resides in the cell membrane. It localises to the cell projection. Its subcellular location is the dendritic spine. It is found in the postsynaptic density. The protein localises to the synapse. In terms of biological role, involved in the regulation of cell growth. May stabilize the active CDC2-cyclin B1 complex and thereby contribute to the regulation of the cell cycle and the prevention of uncontrolled cell proliferation. May act as tumor suppressor. This chain is Leucine zipper putative tumor suppressor 1 (Lzts1), found in Mus musculus (Mouse).